Here is a 271-residue protein sequence, read N- to C-terminus: Aquaporin-11 (271 aa).

Topologically, residues 1 to 14 are cytoplasmic; sequence MSALLGLPPEVQDT. Residues 15-35 traverse the membrane as a helical segment; it reads CISLGLMLLVVLFMGLARVIA. The Lumenal segment spans residues 36-41; sequence RQQLHR. The helical transmembrane segment at 42-62 threads the bilayer; it reads PMVHAFVLEFLATFQLCYCTH. Topologically, residues 63–76 are cytoplasmic; sequence ELQLLSEQDSGHPT. The helical transmembrane segment at 77–97 threads the bilayer; it reads WTLTLIYFFSLVHGLTLVGTA. Over 98-166 the chain is Lumenal; it reads SNPCGVMMQM…NPINTDISKA (69 aa). The short motif at 99–101 is the NPC element; that stretch reads NPC. The helical transmembrane segment at 167 to 187 threads the bilayer; that stretch reads IIIEAICSFIFHSALLHFQEV. The Cytoplasmic portion of the chain corresponds to 188-194; it reads RTKLRIH. The helical transmembrane segment at 195-215 threads the bilayer; it reads VLAALITFLAYAGGSLTGALF. The short motif at 216–218 is the NPA element; it reads NPA. Over 216–234 the chain is Lumenal; that stretch reads NPALALSLHFPCFDESFYK. The chain crosses the membrane as a helical span at residues 235-255; sequence FFVVYWVAPSLGVLLMILMFS. Over 256 to 271 the chain is Cytoplasmic; the sequence is FFLPWLHNNQLSNKKE.

It belongs to the MIP/aquaporin (TC 1.A.8) family. AQP11/AQP12 subfamily. As to quaternary structure, homodimer; disulfide-linked. Homotetramer. Can also form homomultimer. In terms of processing, not glycosylated. In terms of tissue distribution, expressed in retina specifically at retinal Mueller glial cells. Expressed in adult testis, in the elongated spermatids (ES) and in residual bodies inside Sertoli cells.

It localises to the endoplasmic reticulum membrane. It is found in the cytoplasmic vesicle membrane. The protein resides in the cell membrane. It carries out the reaction H2O(in) = H2O(out). It catalyses the reaction glycerol(in) = glycerol(out). The catalysed reaction is H2O2(out) = H2O2(in). Channel protein that facilitates the transport of water, glycerol and hydrogen peroxide across membrane of cell or organelles guaranteeing intracellular homeostasis in several organes like liver, kidney and brain. In situation of stress, participates in endoplasmic reticulum (ER) homeostasis by regulating redox homeostasis through the transport of hydrogen peroxide across the endoplasmic reticulum membrane thereby regulating the oxidative stress through the NADPH oxidase 2 pathway. Plays a role by maintaining an environment suitable for translation or protein foldings in the ER lumen namely by participating in the PKD1 glycosylation processing resulting in regulation of PKD1 membrane trafficking thereby preventing the accumulation of unfolding protein in ER. Plays a role in the proximal tubule function by regulating its endosomal acidification. May play a role in postnatal kidney development. This Rattus norvegicus (Rat) protein is Aquaporin-11.